The sequence spans 236 residues: 2-C-methyl-D-erythritol 4-phosphate cytidylyltransferase (236 aa).

Belongs to the IspD/TarI cytidylyltransferase family. IspD subfamily. As to quaternary structure, homodimer.

The enzyme catalyses 2-C-methyl-D-erythritol 4-phosphate + CTP + H(+) = 4-CDP-2-C-methyl-D-erythritol + diphosphate. The protein operates within isoprenoid biosynthesis; isopentenyl diphosphate biosynthesis via DXP pathway; isopentenyl diphosphate from 1-deoxy-D-xylulose 5-phosphate: step 2/6. Its function is as follows. Catalyzes the formation of 4-diphosphocytidyl-2-C-methyl-D-erythritol from CTP and 2-C-methyl-D-erythritol 4-phosphate (MEP). The polypeptide is 2-C-methyl-D-erythritol 4-phosphate cytidylyltransferase (Escherichia coli O127:H6 (strain E2348/69 / EPEC)).